A 157-amino-acid chain; its full sequence is Transcriptional repressor NrdR (157 aa).

The segment at 1-22 (MRCPKCGATKSSVIDSRQAEEG) is disordered. The segment at 3-34 (CPKCGATKSSVIDSRQAEEGNTIRRRRECDEC) is a zinc-finger region. The 91-residue stretch at 49 to 139 (LVVVKKDGTR…VYRSFKDVSE (91 aa)) folds into the ATP-cone domain.

It belongs to the NrdR family. Zn(2+) is required as a cofactor.

Negatively regulates transcription of bacterial ribonucleotide reductase nrd genes and operons by binding to NrdR-boxes. In Streptococcus pneumoniae (strain Hungary19A-6), this protein is Transcriptional repressor NrdR.